Reading from the N-terminus, the 210-residue chain is Small ribosomal subunit protein uS4 (210 aa).

Residues arginine 99–alanine 161 form the S4 RNA-binding domain.

Belongs to the universal ribosomal protein uS4 family. As to quaternary structure, part of the 30S ribosomal subunit. Contacts protein S5. The interaction surface between S4 and S5 is involved in control of translational fidelity.

Its function is as follows. One of the primary rRNA binding proteins, it binds directly to 16S rRNA where it nucleates assembly of the body of the 30S subunit. Functionally, with S5 and S12 plays an important role in translational accuracy. This is Small ribosomal subunit protein uS4 from Solibacter usitatus (strain Ellin6076).